Reading from the N-terminus, the 289-residue chain is 4-hydroxy-3-methylbut-2-enyl diphosphate reductase (289 aa).

Position 13 (C13) interacts with [4Fe-4S] cluster. The (2E)-4-hydroxy-3-methylbut-2-enyl diphosphate site is built by H41 and H75. 2 residues coordinate dimethylallyl diphosphate: H41 and H75. 2 residues coordinate isopentenyl diphosphate: H41 and H75. Position 97 (C97) interacts with [4Fe-4S] cluster. H129 contributes to the (2E)-4-hydroxy-3-methylbut-2-enyl diphosphate binding site. H129 provides a ligand contact to dimethylallyl diphosphate. Isopentenyl diphosphate is bound at residue H129. E131 functions as the Proton donor in the catalytic mechanism. T167 is a binding site for (2E)-4-hydroxy-3-methylbut-2-enyl diphosphate. [4Fe-4S] cluster is bound at residue C198. The (2E)-4-hydroxy-3-methylbut-2-enyl diphosphate site is built by S226, S227, N228, and S270. Dimethylallyl diphosphate contacts are provided by S226, S227, N228, and S270. S226, S227, N228, and S270 together coordinate isopentenyl diphosphate.

The protein belongs to the IspH family. The cofactor is [4Fe-4S] cluster.

The enzyme catalyses isopentenyl diphosphate + 2 oxidized [2Fe-2S]-[ferredoxin] + H2O = (2E)-4-hydroxy-3-methylbut-2-enyl diphosphate + 2 reduced [2Fe-2S]-[ferredoxin] + 2 H(+). The catalysed reaction is dimethylallyl diphosphate + 2 oxidized [2Fe-2S]-[ferredoxin] + H2O = (2E)-4-hydroxy-3-methylbut-2-enyl diphosphate + 2 reduced [2Fe-2S]-[ferredoxin] + 2 H(+). Its pathway is isoprenoid biosynthesis; dimethylallyl diphosphate biosynthesis; dimethylallyl diphosphate from (2E)-4-hydroxy-3-methylbutenyl diphosphate: step 1/1. It functions in the pathway isoprenoid biosynthesis; isopentenyl diphosphate biosynthesis via DXP pathway; isopentenyl diphosphate from 1-deoxy-D-xylulose 5-phosphate: step 6/6. Functionally, catalyzes the conversion of 1-hydroxy-2-methyl-2-(E)-butenyl 4-diphosphate (HMBPP) into a mixture of isopentenyl diphosphate (IPP) and dimethylallyl diphosphate (DMAPP). Acts in the terminal step of the DOXP/MEP pathway for isoprenoid precursor biosynthesis. In Bacteroides thetaiotaomicron (strain ATCC 29148 / DSM 2079 / JCM 5827 / CCUG 10774 / NCTC 10582 / VPI-5482 / E50), this protein is 4-hydroxy-3-methylbut-2-enyl diphosphate reductase.